The chain runs to 85 residues: UPF0386 protein RL2079 (85 aa).

The protein belongs to the UPF0386 family.

The polypeptide is UPF0386 protein RL2079 (Rhizobium johnstonii (strain DSM 114642 / LMG 32736 / 3841) (Rhizobium leguminosarum bv. viciae)).